The primary structure comprises 293 residues: MANLKEIRAKVTSIQSTQKITRAMQMVAASKMRRAQERMEVGRPYADSMRRVISHLVHASSDYKHPYMVSRPVNRVGYIVITSDRGLAGGLNINLFKALSKNIQKYQEQSVQAEFAVIGAKGVSFFKSFGGKVTSAVTDYGDKPTFEQINAPVQAMLDDYTNGKIDRIYVVYNKFVNAMTQKPTVNQLVPLPESAFGEEESGIQTELSWDYIYEPDIKTLIDELLGRYIESIVYQAVMENIASEQSSRMVAMKAATDNAGDLINDLQLVYNKLRQAAITREISEIVGGAAAVS.

The protein belongs to the ATPase gamma chain family. As to quaternary structure, F-type ATPases have 2 components, CF(1) - the catalytic core - and CF(0) - the membrane proton channel. CF(1) has five subunits: alpha(3), beta(3), gamma(1), delta(1), epsilon(1). CF(0) has three main subunits: a, b and c.

Its subcellular location is the cell inner membrane. In terms of biological role, produces ATP from ADP in the presence of a proton gradient across the membrane. The gamma chain is believed to be important in regulating ATPase activity and the flow of protons through the CF(0) complex. This is ATP synthase gamma chain from Psychrobacter cryohalolentis (strain ATCC BAA-1226 / DSM 17306 / VKM B-2378 / K5).